A 570-amino-acid chain; its full sequence is MKESPLITLVKRHSETHFANIKYGYYVLIISLVYLIGLALLRAFGRRTPSRSSSAFKNKIIYRLYDIDPAIHLGILFFAVLIPFYYHYSLTTQSTVYLKRLGRLSYALIPLNLFLTLRPNWFLRKNCTYTDFIPFHKWFSRIITVIGLLHGIFFIIKWAIDDNVSLKQKLILKTFNFVGFIISILVLFLLICSIGPMRRYNYRLFYIVHNLVNVAFILLTPIHSRPGVKFPFLLLNCTLLFIHIINRIVFAKSLMILNKNANYSKTNLVHVRLPRAILPDYFEPGSHIRISPYRRINPLYWLLPSHPYTIASLAEDNSIDLIIKETSTAEPGSQIESLRSNPKSFHLDQEKTYTLINSYPPSVPEECYSQGTNIAIICGGSGISFALPLFRHFFNKENVKYLKMIWLIKNYSEYELVLDYLKTNGLTFEKKPSNNKRISVFISGEYTAETRLDEITTNIDDENSEYEMGSFNNEDEDLSISNFNSENADSNDKTPETSHSPTKENGSLIEVKSKHSFTLSNELKSFNNESAQVNQNETWLFSCGPPSLLQLSKKYCNDERINFVCETYGL.

A run of 7 helical transmembrane segments spans residues 21–41 (IKYGYYVLIISLVYLIGLALL), 70–90 (AIHLGILFFAVLIPFYYHYSL), 101–118 (LGRLSYALIPLNLFLTLR), 142–162 (IITVIGLLHGIFFIIKWAIDD), 177–197 (FVGFIISILVLFLLICSIGPM), 204–224 (LFYIVHNLVNVAFILLTPIHS), and 230–250 (FPFLLLNCTLLFIHIINRIVF). The 119-residue stretch at 101 to 219 (LGRLSYALIP…NLVNVAFILL (119 aa)) folds into the Ferric oxidoreductase domain. An FAD-binding FR-type domain is found at 250–388 (FAKSLMILNK…GGSGISFALP (139 aa)). Residues 480 to 507 (ISNFNSENADSNDKTPETSHSPTKENGS) are disordered.

Belongs to the ferric reductase (FRE) family. AIM14 subfamily. As to quaternary structure, interacts with ribosomes.

The protein resides in the membrane. In terms of biological role, probable cell surface metalloreductase. May be involved in iron or copper homeostasis. This is Probable metalloreductase AIM14 (AIM14) from Saccharomyces cerevisiae (strain JAY291) (Baker's yeast).